A 262-amino-acid polypeptide reads, in one-letter code: Zinc import ATP-binding protein ZnuC (262 aa).

An ABC transporter domain is found at 4–220 (LNLSGVRLSH…PEYLALFGPR (217 aa)). 36-43 (GPNGAGKS) lines the ATP pocket. The disordered stretch occupies residues 238-262 (ADGSVLPLAEGGGEPHTHGPGCRHG).

This sequence belongs to the ABC transporter superfamily. Zinc importer (TC 3.A.1.15.5) family. The complex is composed of two ATP-binding proteins (ZnuC), two transmembrane proteins (ZnuB) and a solute-binding protein (ZnuA).

The protein localises to the cell inner membrane. It carries out the reaction Zn(2+)(out) + ATP(in) + H2O(in) = Zn(2+)(in) + ADP(in) + phosphate(in) + H(+)(in). Part of the ABC transporter complex ZnuABC involved in zinc import. Responsible for energy coupling to the transport system. The polypeptide is Zinc import ATP-binding protein ZnuC (Paramagnetospirillum magneticum (strain ATCC 700264 / AMB-1) (Magnetospirillum magneticum)).